We begin with the raw amino-acid sequence, 529 residues long: Cytochrome P450 monooxygenase ausG (529 aa).

The chain crosses the membrane as a helical span at residues 31–51 (FLVTCGLPWLLLLFSVTIILF). Residue cysteine 470 participates in heme binding.

The protein belongs to the cytochrome P450 family. Requires heme as cofactor.

The protein localises to the membrane. It participates in secondary metabolite biosynthesis; terpenoid biosynthesis. Its function is as follows. Cytochrome P450 monooxygenase; part of the gene cluster B that mediates the biosynthesis of austinol and dehydroaustinol, two fungal meroterpenoids. The first step of the pathway is the synthesis of 3,5-dimethylorsellinic acid by the polyketide synthase ausA. 3,5-dimethylorsellinic acid is then prenylated by the polyprenyl transferase ausN. Further epoxidation by the FAD-dependent monooxygenase ausM and cyclization by the probable terpene cyclase ausL lead to the formation of protoaustinoid A. Protoaustinoid A is then oxidized to spiro-lactone preaustinoid A3 by the combined action of the FAD-binding monooxygenases ausB and ausC, and the dioxygenase ausE. Acid-catalyzed keto-rearrangement and ring contraction of the tetraketide portion of preaustinoid A3 by ausJ lead to the formation of preaustinoid A4. The aldo-keto reductase ausK, with the help of ausH, is involved in the next step by transforming preaustinoid A4 into isoaustinone which is in turn hydroxylated by the P450 monooxygenase ausI to form austinolide. Finally, the cytochrome P450 monooxygenase ausG modifies austinolide to austinol. Austinol can be further modified to dehydroaustinol which forms a diffusible complex with diorcinol that initiates conidiation. Due to genetic rearrangements of the clusters and the subsequent loss of some enzymes, the end products of the Emericella nidulans austinoid biosynthesis clusters are austinol and dehydroaustinol, even if additional enzymes, such as the O-acetyltransferase ausQ and the cytochrome P450 monooxygenase ausR are still functional. This chain is Cytochrome P450 monooxygenase ausG, found in Emericella nidulans (strain FGSC A4 / ATCC 38163 / CBS 112.46 / NRRL 194 / M139) (Aspergillus nidulans).